The sequence spans 259 residues: UPF0246 protein ABBFA_001173 (259 aa).

Belongs to the UPF0246 family.

This is UPF0246 protein ABBFA_001173 from Acinetobacter baumannii (strain AB307-0294).